The following is a 584-amino-acid chain: Protein DENND6A (584 aa).

Residues 1–23 (MALWERGAGGAAEAGEDATEEPE) form a disordered region. The 180-residue stretch at 39–218 (HCVCVVGFDL…KLRIPTYRDK (180 aa)) folds into the uDENN domain. The region spanning 244–369 (EVDLFRCFCP…VKVKKLKNLK (126 aa)) is the cDENN domain. A dDENN domain is found at 371–504 (LDSKPGVYTS…RSRQKEMTQN (134 aa)).

This sequence belongs to the DENND6 family.

The protein resides in the recycling endosome. It localises to the cytoplasm. In terms of biological role, guanine nucleotide exchange factor (GEF) for RAB14. In Gallus gallus (Chicken), this protein is Protein DENND6A (DENND6A).